Consider the following 118-residue polypeptide: Putative pterin-4-alpha-carbinolamine dehydratase (118 aa).

It belongs to the pterin-4-alpha-carbinolamine dehydratase family.

The enzyme catalyses (4aS,6R)-4a-hydroxy-L-erythro-5,6,7,8-tetrahydrobiopterin = (6R)-L-erythro-6,7-dihydrobiopterin + H2O. The polypeptide is Putative pterin-4-alpha-carbinolamine dehydratase (Pseudomonas paraeruginosa (strain DSM 24068 / PA7) (Pseudomonas aeruginosa (strain PA7))).